The following is a 257-amino-acid chain: UPF0246 protein YaaA (257 aa).

The protein belongs to the UPF0246 family.

This chain is UPF0246 protein YaaA, found in Salmonella arizonae (strain ATCC BAA-731 / CDC346-86 / RSK2980).